Consider the following 298-residue polypeptide: Tyrosine recombinase XerC (298 aa).

The region spanning 2–88 is the Core-binding (CB) domain; that stretch reads TDLHTDVERY…ALRSFFDWLV (87 aa). In terms of domain architecture, Tyr recombinase spans 109–288; it reads HLPKNIDVDD…DFQHLASVYD (180 aa). Residues Arg-148, Lys-172, His-240, Arg-243, and His-266 contribute to the active site. Tyr-275 (O-(3'-phospho-DNA)-tyrosine intermediate) is an active-site residue.

Belongs to the 'phage' integrase family. XerC subfamily. As to quaternary structure, forms a cyclic heterotetrameric complex composed of two molecules of XerC and two molecules of XerD, in which XerC interacts with XerD via its C-terminal region, XerD interacts with XerC via its C-terminal region and so on.

Its subcellular location is the cytoplasm. Its activity is regulated as follows. FtsK may regulate the catalytic switch between XerC and XerD in the heterotetrameric complex during the two steps of the recombination process. Site-specific tyrosine recombinase, which acts by catalyzing the cutting and rejoining of the recombining DNA molecules. Binds cooperatively to specific DNA consensus sequences that are separated from XerD binding sites by a short central region, forming the heterotetrameric XerC-XerD complex that recombines DNA substrates. The complex is essential to convert dimers of the bacterial chromosome into monomers to permit their segregation at cell division. It also contributes to the segregational stability of plasmids. In the complex XerC specifically exchanges the top DNA strands. The polypeptide is Tyrosine recombinase XerC (Escherichia coli O139:H28 (strain E24377A / ETEC)).